The chain runs to 475 residues: ATP synthase subunit beta (475 aa).

155-162 (GGAGVGKT) provides a ligand contact to ATP.

The protein belongs to the ATPase alpha/beta chains family. In terms of assembly, F-type ATPases have 2 components, CF(1) - the catalytic core - and CF(0) - the membrane proton channel. CF(1) has five subunits: alpha(3), beta(3), gamma(1), delta(1), epsilon(1). CF(0) has three main subunits: a(1), b(2) and c(9-12). The alpha and beta chains form an alternating ring which encloses part of the gamma chain. CF(1) is attached to CF(0) by a central stalk formed by the gamma and epsilon chains, while a peripheral stalk is formed by the delta and b chains.

Its subcellular location is the cell inner membrane. It carries out the reaction ATP + H2O + 4 H(+)(in) = ADP + phosphate + 5 H(+)(out). In terms of biological role, produces ATP from ADP in the presence of a proton gradient across the membrane. The catalytic sites are hosted primarily by the beta subunits. This is ATP synthase subunit beta from Rhizobium etli (strain CIAT 652).